The chain runs to 98 residues: 10 kDa chaperonin, mitochondrial (98 aa).

The N-terminal 17 residues, 1–17 (MMKRLIPTFNRILVQRV), are a transit peptide targeting the mitochondrion. The interval 18 to 94 (IQPAKTESGI…LFRDEDVLGT (77 aa)) is cpn-10 domain.

Belongs to the GroES chaperonin family. As to quaternary structure, forms stable complexes with CPN60 in the presence of ATP.

Its subcellular location is the mitochondrion. Seems to function only as a co-chaperone, along with CPN60, and in certain cases is essential for the discharge of biologically active proteins from CPN60. The polypeptide is 10 kDa chaperonin, mitochondrial (CPN10) (Arabidopsis thaliana (Mouse-ear cress)).